The sequence spans 119 residues: Myohemerythrin-1 (119 aa).

8 residues coordinate Fe cation: histidine 25, histidine 55, asparagine 58, glutamate 59, histidine 74, histidine 78, histidine 107, and aspartate 112.

It belongs to the hemerythrin family. In terms of assembly, monomer. As to expression, muscle.

Myohemerythrin is an oxygen-binding protein found in the retractor muscles of certain worms. The oxygen-binding site contains two iron atoms. This chain is Myohemerythrin-1, found in Phascolopsis gouldii (Peanut worm).